Here is a 355-residue protein sequence, read N- to C-terminus: MSKDYGTPPENWREVYDEICKMKAKVVAPVDVQGCHTLGERNDPKKFRFQTLVALMLSSQTKDIVLGPTMRNLKEKLAGGLCLEDIQNIDEVSLNKLIEKVGFHNRKTIYLKQMARILSEKFQGDIPDTVEDLMTLPGVGPKMGYLCMSIAWNKTVGIGVDVHVHRICNLLHWCNTKTEEQTRAALQSWLPKELWFELNHTLVGFGQTICLPRGRRCDMCTLSSKGLCPSAFKEKSGITITKRKVKTIKRVKKRPASESPPLSPLSLPTDDLYYQSIEDKSLIKLEDLDPVDSISHMNEPLKKEPAADIDVDQKPPVAFHSTTKETRSLRRSKRVAKKSSQYFSQQSLQDIEDLV.

Positions 44–50 match the Nuclear localization signal motif; that stretch reads PKKFRFQ. The HhH domain maps to 122–149; that stretch reads FQGDIPDTVEDLMTLPGVGPKMGYLCMS. Catalysis depends on Lys-142, which acts as the Nucleophile; for N-glycosylase activity. [4Fe-4S] cluster is bound by residues Cys-210, Cys-217, Cys-220, and Cys-228. The Nuclear localization signal motif lies at 252–255; sequence KKRP. A disordered region spans residues 303–355; it reads KEPAADIDVDQKPPVAFHSTTKETRSLRRSKRVAKKSSQYFSQQSLQDIEDLV. Polar residues predominate over residues 338–349; that stretch reads KSSQYFSQQSLQ.

The protein belongs to the Nth/MutY family. Requires [4Fe-4S] cluster as cofactor.

It localises to the nucleus. The protein resides in the mitochondrion. The catalysed reaction is 2'-deoxyribonucleotide-(2'-deoxyribose 5'-phosphate)-2'-deoxyribonucleotide-DNA = a 3'-end 2'-deoxyribonucleotide-(2,3-dehydro-2,3-deoxyribose 5'-phosphate)-DNA + a 5'-end 5'-phospho-2'-deoxyribonucleoside-DNA + H(+). In terms of biological role, bifunctional DNA N-glycosylase with associated apurinic/apyrimidinic (AP) lyase function that catalyzes the first step in base excision repair (BER), the primary repair pathway for the repair of oxidative DNA damage. The DNA N-glycosylase activity releases the damaged DNA base from DNA by cleaving the N-glycosidic bond, leaving an AP site. The AP-lyase activity cleaves the phosphodiester bond 3' to the AP site by a beta-elimination. Primarily recognizes and repairs oxidative base damage of pyrimidines. Also has 8-oxo-7,8-dihydroguanine (8-oxoG) DNA glycosylase activity. Also involved in the repair of 7-methylguanine lesions, although it cannot directly repair alkylated DNA bases. Probably does so via excision of methylformamidopyrimidine (mFapy) lesions, a spontaneous processing product of 7-methylguanine. The sequence is that of Endonuclease III homolog (nth1) from Schizosaccharomyces pombe (strain 972 / ATCC 24843) (Fission yeast).